The following is a 323-amino-acid chain: MDLSPYIKISERDNFTIYSYPKKYLELFLDELFYQKSIEINDDHTFKMSKNGYIIDNFNKESSVDFEYLRQSQIAVYWIHEWYDYLIKNSDNKNITFKTKLIELSNEDIESLFNFKTYGIIPESLLKIIDDSITEINNLCFVRTDAYSPKDLVFENKIDNLKVSDALTAIKLITDSERCCQKLFSNDQIISKYLAIREYVNLDTNYEFRCFIYNWNLRAICQSGFEYNSELHAKKKIIRDSILKFWNKFESICPYSECTMDIIYDNNFKNTLNDSCIMVIEFNSFGPHMNADSGLYDWDRDYILLTKSNQPHFLLAEKPLNTI.

The protein belongs to the CDC123 family.

This Acanthamoeba polyphaga mimivirus (APMV) protein is Putative CDC123-like protein L884.